The sequence spans 376 residues: MKALLALEDGFILEGQSINGHCESSGEVIFNTGMTGYQEILTDPSYYGQMVCMTWPLIGNYGINKEDMESEKIHVSALIVKECCRNPSNWRSETSLPKFLQEYNIAGIEGIDTRALTRHIRINGAMRGIISTSITDPNDLILRVKKVPSMEGQNYVTKVAPNSPWVLYGQCVVPADIKEDGSFLWKQNKIPLIVYDYGIKWNIIRLLEGAGFDPLMVPPLFSLEQVKASGAKAIFLSNGPGDPGTLIDEIQIIRELMEYYPIAGICLGHQLLGHAVGGTTRKLTFGHHGSNHPIKNLATGHIEISSQNHGFCVNFESNNDIEVTHINLNDNTLEGFIHKTKPILAVQHHPEASPGPMDSQYFFTRFKEVVLLKLGC.

A CPSase region spans residues 1-187 (MKALLALEDG…KEDGSFLWKQ (187 aa)). L-glutamine contacts are provided by S45, G239, and G241. A Glutamine amidotransferase type-1 domain is found at 189–376 (KIPLIVYDYG…KEVVLLKLGC (188 aa)). Residue C266 is the Nucleophile of the active site. The L-glutamine site is built by L267, Q270, N308, G310, and F311. Catalysis depends on residues H349 and E351.

This sequence belongs to the CarA family. Composed of two chains; the small (or glutamine) chain promotes the hydrolysis of glutamine to ammonia, which is used by the large (or ammonia) chain to synthesize carbamoyl phosphate. Tetramer of heterodimers (alpha,beta)4.

It carries out the reaction hydrogencarbonate + L-glutamine + 2 ATP + H2O = carbamoyl phosphate + L-glutamate + 2 ADP + phosphate + 2 H(+). The enzyme catalyses L-glutamine + H2O = L-glutamate + NH4(+). It functions in the pathway amino-acid biosynthesis; L-arginine biosynthesis; carbamoyl phosphate from bicarbonate: step 1/1. Its pathway is pyrimidine metabolism; UMP biosynthesis via de novo pathway; (S)-dihydroorotate from bicarbonate: step 1/3. Functionally, small subunit of the glutamine-dependent carbamoyl phosphate synthetase (CPSase). CPSase catalyzes the formation of carbamoyl phosphate from the ammonia moiety of glutamine, carbonate, and phosphate donated by ATP, constituting the first step of 2 biosynthetic pathways, one leading to arginine and/or urea and the other to pyrimidine nucleotides. The small subunit (glutamine amidotransferase) binds and cleaves glutamine to supply the large subunit with the substrate ammonia. The sequence is that of Carbamoyl phosphate synthase small chain from Lawsonia intracellularis (strain PHE/MN1-00).